Here is a 130-residue protein sequence, read N- to C-terminus: Small ribosomal subunit protein uS9 (130 aa).

It belongs to the universal ribosomal protein uS9 family.

This chain is Small ribosomal subunit protein uS9, found in Pectobacterium atrosepticum (strain SCRI 1043 / ATCC BAA-672) (Erwinia carotovora subsp. atroseptica).